A 652-amino-acid polypeptide reads, in one-letter code: tRNA 5-methylaminomethyl-2-thiouridine biosynthesis bifunctional protein MnmC (652 aa).

Positions 1-235 (MPDRLVPATL…EPALRVGEYA (235 aa)) are tRNA (mnm(5)s(2)U34)-methyltransferase. The FAD-dependent cmnm(5)s(2)U34 oxidoreductase stretch occupies residues 259 to 652 (IGAGLAGCAV…IRALRGRQIG (394 aa)).

It in the N-terminal section; belongs to the methyltransferase superfamily. tRNA (mnm(5)s(2)U34)-methyltransferase family. This sequence in the C-terminal section; belongs to the DAO family. FAD serves as cofactor.

Its subcellular location is the cytoplasm. It carries out the reaction 5-aminomethyl-2-thiouridine(34) in tRNA + S-adenosyl-L-methionine = 5-methylaminomethyl-2-thiouridine(34) in tRNA + S-adenosyl-L-homocysteine + H(+). In terms of biological role, catalyzes the last two steps in the biosynthesis of 5-methylaminomethyl-2-thiouridine (mnm(5)s(2)U) at the wobble position (U34) in tRNA. Catalyzes the FAD-dependent demodification of cmnm(5)s(2)U34 to nm(5)s(2)U34, followed by the transfer of a methyl group from S-adenosyl-L-methionine to nm(5)s(2)U34, to form mnm(5)s(2)U34. The polypeptide is tRNA 5-methylaminomethyl-2-thiouridine biosynthesis bifunctional protein MnmC (Burkholderia ambifaria (strain MC40-6)).